The sequence spans 511 residues: ESX-1 secretion system protein EccD1 (511 aa).

Serine 2 carries the post-translational modification N-acetylserine. The Cytoplasmic segment spans residues 2–143 (SAPAVAAGPT…PEFDRTALNR (142 aa)). A helical transmembrane segment spans residues 144–164 (FVGAAIPLLTAPVIGMAMRAW). Topologically, residues 165-170 (WETGRS) are periplasmic. A helical transmembrane segment spans residues 171–191 (LWWPLAIGILGIAVLVGSFVA). Topologically, residues 192–202 (NRFYQSGHLAE) are cytoplasmic. Residues 203 to 223 (CLLVTTYLLIATAAALAVPLP) traverse the membrane as a helical segment. Over 224-227 (RGVN) the chain is Periplasmic. A helical transmembrane segment spans residues 228–248 (SLGAPQVAGAATAVLFLTLMT). The Cytoplasmic portion of the chain corresponds to 249–257 (RGGPRKRHE). The chain crosses the membrane as a helical span at residues 258–278 (LASFAVITAIAVIAAAAAFGY). Over 279–285 (GYQDWVP) the chain is Periplasmic. The chain crosses the membrane as a helical span at residues 286-306 (AGGIAFGLFIVTNAAKLTVAV). Topologically, residues 307 to 367 (ARIALPPIPV…TERSKLAKQL (61 aa)) are cytoplasmic. Transmembrane regions (helical) follow at residues 368-388 (LIGY…AVVV) and 389-409 (RGHF…VCGF). Topologically, residues 410 to 420 (RSRLYAERWCA) are cytoplasmic. Residues 421–441 (WALLAATVAIPTGLTAKLIIW) form a helical membrane-spanning segment. At 442–444 (YPH) the chain is on the periplasmic side. A helical transmembrane segment spans residues 445 to 465 (YAWLLLSVYLTVALVALVVVG). Over 466–482 (SMAHVRRVSPVVKRTLE) the chain is Cytoplasmic. Residues 483 to 503 (LIDGAMIAAIIPMLLWITGVY) form a helical membrane-spanning segment. Residues 504–511 (DTVRNIRF) are Periplasmic-facing.

The protein belongs to the EccD/Snm4 family. As to quaternary structure, possibly a homodimer. Part of the ESX-1 / type VII secretion system (T7SS), which is composed of cytosolic and membrane components. The ESX-1 membrane complex is composed of EccB1, EccCa1, EccCb1, EccD1 and EccE1.

The protein localises to the cell inner membrane. Its function is as follows. Part of the ESX-1 specialized secretion system, which delivers several virulence factors to host cells during infection, including the key virulence factors EsxA (ESAT-6) and EsxB (CFP-10). This chain is ESX-1 secretion system protein EccD1, found in Mycobacterium tuberculosis (strain ATCC 25618 / H37Rv).